Reading from the N-terminus, the 287-residue chain is Eukaryotic translation initiation factor 3 subunit G (287 aa).

2 disordered regions span residues 1 to 34 (MSKLANRADWADDEEFDDPSALPAQQVTTNKDGT) and 159 to 184 (TAGGAGEDDEAAAGAVGTGSGSYVPP). The RRM domain maps to 207–285 (ATLRVTNVSE…LILRVEFAKR (79 aa)).

This sequence belongs to the eIF-3 subunit G family. Component of the eukaryotic translation initiation factor 3 (eIF-3) complex.

It is found in the cytoplasm. Its function is as follows. RNA-binding component of the eukaryotic translation initiation factor 3 (eIF-3) complex, which is involved in protein synthesis of a specialized repertoire of mRNAs and, together with other initiation factors, stimulates binding of mRNA and methionyl-tRNAi to the 40S ribosome. The eIF-3 complex specifically targets and initiates translation of a subset of mRNAs involved in cell proliferation. This subunit can bind 18S rRNA. The polypeptide is Eukaryotic translation initiation factor 3 subunit G (tif35) (Aspergillus oryzae (strain ATCC 42149 / RIB 40) (Yellow koji mold)).